A 725-amino-acid chain; its full sequence is Ribonuclease Y (725 aa).

The helical transmembrane segment at 4 to 24 threads the bilayer; the sequence is VLVILLSLVLLVLVALILAVA. Disordered stretches follow at residues 62–140, 165–195, and 300–321; these read DGPA…ASDT, VAATEDTSLEAPLRESALRESAPGESASVRR, and EQRVEERTAGLDEHASRLAGRE. 2 stretches are compositionally biased toward low complexity: residues 84 to 100 and 114 to 137; these read DAPGAAYGESAAAPDAG and AAAPEPGAAIGGAPTPAAGSPADA. The KH domain maps to 415–481; the sequence is VVTVLHLPGD…RITLAALVSD (67 aa). An HD domain is found at 541–634; sequence VLAHLIESAH…TQAADQISGG (94 aa).

The protein belongs to the RNase Y family.

The protein resides in the cell membrane. Its function is as follows. Endoribonuclease that initiates mRNA decay. This Frankia alni (strain DSM 45986 / CECT 9034 / ACN14a) protein is Ribonuclease Y.